The sequence spans 383 residues: Protein phosphatase 2C homolog 4 (383 aa).

One can recognise a PPM-type phosphatase domain in the interval 51–356 (SLGLCTARGD…DDITCLVVRL (306 aa)). Positions 92, 308, and 347 each coordinate Mn(2+).

The protein belongs to the PP2C family. Monomer. The cofactor is Mg(2+). Mn(2+) is required as a cofactor.

The protein resides in the vacuole membrane. It catalyses the reaction O-phospho-L-seryl-[protein] + H2O = L-seryl-[protein] + phosphate. The enzyme catalyses O-phospho-L-threonyl-[protein] + H2O = L-threonyl-[protein] + phosphate. Has a role in the regulation of vacuole fusion. This chain is Protein phosphatase 2C homolog 4 (ptc4), found in Schizosaccharomyces pombe (strain 972 / ATCC 24843) (Fission yeast).